The chain runs to 429 residues: MQHHHQGSYGGGGGGGGYPGQAYREQNPYGYGQQSPQQGYGAPQQHNGYNQPPSGYGQPQHNGGQMYGQRQQGMWLRVRIASRDRKFLTFALGQYQNHYSHPHQGGPPPPPSEPVAFGHGAPQGYNFQYSRCTGKRKALMIGINYFGQKGQLRGCINDVKNMSTYLNQNFGYAREDMVLLTDDQQNPMSQPTKANILRAMHWLVKDAQPNDSLFFHYSGHGGQTPDLDGDEEDGYDEVIYPVDFRQAGHIVDDEMHRIMVQPLRPGVRLTAIFDSCHSGSALDLPYIYSTQGILKEPNLAKEAGQGLLGVVSAYARGDMGSMVSTAVGFLKRAAKGDEAYERTKQTKTSPADVIMWSGSKDSQTSQDAQIAGQATGAMSWAFISALRKNPQQSYVQLLNSIRDELATKYTQKPQLSCSHPLDTNLLYVM.

A disordered region spans residues 1-68 (MQHHHQGSYG…PQHNGGQMYG (68 aa)). Positions 8–19 (SYGGGGGGGGYP) are enriched in gly residues. Residues 20–45 (GQAYREQNPYGYGQQSPQQGYGAPQQ) are compositionally biased toward low complexity. The span at 46 to 62 (HNGYNQPPSGYGQPQHN) shows a compositional bias: polar residues. Catalysis depends on residues H220 and C276.

The protein belongs to the peptidase C14B family.

Its function is as follows. Involved in cell death (apoptosis). The protein is Metacaspase-1A (casA) of Aspergillus clavatus (strain ATCC 1007 / CBS 513.65 / DSM 816 / NCTC 3887 / NRRL 1 / QM 1276 / 107).